A 535-amino-acid polypeptide reads, in one-letter code: Sodium channel protein Nach (535 aa).

At 1 to 49 (MGHQEELKPEQVDLKVTPFVGYLRRTWSDFCATSSIHGLKYTRDEDTNK) the chain is on the cytoplasmic side. Residues 50 to 70 (IVHLVWLLISVVMFICAVVMA) traverse the membrane as a helical segment. Topologically, residues 71-471 (RTFYMDYRSS…LVSNLGSAFS (401 aa)) are extracellular. Asn165, Asn239, and Asn367 each carry an N-linked (GlcNAc...) asparagine glycan. A helical transmembrane segment spans residues 472 to 492 (LFVGMSMLSVVEIIYYFSVIL). The Cytoplasmic portion of the chain corresponds to 493-535 (RKNYKLECETRSQMLHKKPKFAWPKANDTHSKEQKSVFIIHKS).

The protein belongs to the amiloride-sensitive sodium channel (TC 1.A.6) family. In terms of tissue distribution, embryonic and larval tracheal system; dorsal trunk (but not at fusion with transverse connective), several branches and terminal cells. Also expressed in adult tracheal system; dorsal trunk, but not at the spiracles.

The protein localises to the membrane. Functionally, part of a complex that plays a role in tracheal liquid clearance. Probable role in sodium transport. This is Sodium channel protein Nach (Nach) from Drosophila melanogaster (Fruit fly).